Consider the following 154-residue polypeptide: Myoglobin (154 aa).

The region spanning 2 to 148 (GLSDGEWQQV…FRNDIAAKYK (147 aa)) is the Globin domain. A Phosphoserine modification is found at Ser4. His65 provides a ligand contact to nitrite. His65 lines the O2 pocket. Residue His94 coordinates heme b.

It belongs to the globin family. In terms of assembly, monomeric.

The protein resides in the cytoplasm. It localises to the sarcoplasm. It carries out the reaction Fe(III)-heme b-[protein] + nitric oxide + H2O = Fe(II)-heme b-[protein] + nitrite + 2 H(+). The enzyme catalyses H2O2 + AH2 = A + 2 H2O. Functionally, monomeric heme protein which primary function is to store oxygen and facilitate its diffusion within muscle tissues. Reversibly binds oxygen through a pentacoordinated heme iron and enables its timely and efficient release as needed during periods of heightened demand. Depending on the oxidative conditions of tissues and cells, and in addition to its ability to bind oxygen, it also has a nitrite reductase activity whereby it regulates the production of bioactive nitric oxide. Under stress conditions, like hypoxia and anoxia, it also protects cells against reactive oxygen species thanks to its pseudoperoxidase activity. This Equus quagga burchellii (Burchell's zebra) protein is Myoglobin (MB).